Consider the following 726-residue polypeptide: PWWP domain-containing protein 2 (726 aa).

Positions 1–10 (MSTESERIES) are enriched in basic and acidic residues. Residues 1–26 (MSTESERIESVSEANASSLEVGNDQM) are disordered. Polar residues predominate over residues 12 to 26 (SEANASSLEVGNDQM). The region spanning 199–260 (DSDLVWAKVR…ASRIKPFRQH (62 aa)) is the PWWP domain. The tract at residues 392-441 (APKISPAEEQSSLVEVSDPEPTKSKQVYTKRRKTNLQTEQSSLVEVSDPD) is disordered. Residues 426 to 435 (NLQTEQSSLV) show a composition bias toward polar residues. Short sequence motifs (nuclear localization signal) lie at residues 460 to 467 (KKKEKTLA) and 495 to 502 (KKRKVVQS). Disordered stretches follow at residues 472–545 (EKRV…PQKA) and 568–726 (TRLL…VSAE). Residues 494–512 (EKKRKVVQSKVPKSTKKIK) show a composition bias toward basic residues. Polar residues predominate over residues 606–634 (SPSTTLSSPHAASVTKTTSGKSNSVSLDH). Positions 658-688 (LESRDLKDSSKEQVVHEDKKEAANVADEKSI) are enriched in basic and acidic residues.

This sequence belongs to the PDP family. In terms of assembly, interacts with DEK3. Binds to MSI4/FVE and MSI5. Component of the PRC2 (polycomb repressive complex 2) complex which regulates histone methylation on histone H3K27.

It localises to the nucleus. Together with PDP1, PDP3 and PDP6, interacts with MSI4/FVE and MSI5 to suppress FLC, MAF4 and MAF5 expression by regulating the function of the PRC2 complex and modulating H3K27me3 level, thereby promoting flowering. This Arabidopsis thaliana (Mouse-ear cress) protein is PWWP domain-containing protein 2.